Reading from the N-terminus, the 460-residue chain is Ribosome biogenesis protein YTM1 (460 aa).

The segment at 8–89 (VKIRFFTREK…EASLNVEYTR (82 aa)) is ubiquitin-like (UBL) domain. Positions 99–460 (SFSNEDWVSS…INKGDNIFKN (362 aa)) are sufficient for interaction with ERB1 and association with 66S pre-ribosomes. 7 WD repeats span residues 101–140 (SNED…QKQY), 142–180 (GHSG…LKLT), 206–244 (GHKA…MTVV), 285–325 (SHTA…CIDT), 327–366 (TTSY…SSKV), 373–413 (GHKN…PMYT), and 424–460 (GVND…IFKN).

Belongs to the WD repeat WDR12/YTM1 family. As to quaternary structure, component of the NOP7 complex, composed of ERB1, NOP7 and YTM1. The complex is held together by ERB1, which interacts with NOP7 via its N-terminal domain and with YTM1 via a high-affinity interaction between the seven-bladed beta-propeller domains of the 2 proteins. The NOP7 complex associates with the 66S pre-ribosome. Interacts (via UBL domain) with MDN1 (via VWFA/MIDAS domain).

Its subcellular location is the nucleus. The protein localises to the nucleolus. The protein resides in the nucleoplasm. Its function is as follows. Component of the NOP7 complex, which is required for maturation of the 25S and 5.8S ribosomal RNAs and formation of the 60S ribosome. The protein is Ribosome biogenesis protein YTM1 of Saccharomyces cerevisiae (strain YJM789) (Baker's yeast).